The chain runs to 109 residues: Cysteine-rich venom protein 7 (109 aa).

The first 21 residues, 1-21 (MSKVFVIILVALMVAISIASA), serve as a signal peptide directing secretion. Disulfide bonds link Cys30-Cys47, Cys37-Cys52, Cys46-Cys58, Cys70-Cys90, and Cys78-Cys98.

As to expression, expressed by the venom gland.

It is found in the secreted. This is Cysteine-rich venom protein 7 from Pimpla hypochondriaca (Parasitoid wasp).